A 252-amino-acid polypeptide reads, in one-letter code: Hydroxyacylglutathione hydrolase (252 aa).

Residues His-54, His-56, Asp-58, His-59, His-111, Asp-128, and His-166 each contribute to the Zn(2+) site.

It belongs to the metallo-beta-lactamase superfamily. Glyoxalase II family. As to quaternary structure, monomer. Zn(2+) serves as cofactor.

It carries out the reaction an S-(2-hydroxyacyl)glutathione + H2O = a 2-hydroxy carboxylate + glutathione + H(+). Its pathway is secondary metabolite metabolism; methylglyoxal degradation; (R)-lactate from methylglyoxal: step 2/2. Functionally, thiolesterase that catalyzes the hydrolysis of S-D-lactoyl-glutathione to form glutathione and D-lactic acid. The chain is Hydroxyacylglutathione hydrolase from Vibrio vulnificus (strain CMCP6).